We begin with the raw amino-acid sequence, 92 residues long: DNA-directed RNA polymerase subunit Rpo11 (92 aa).

It belongs to the archaeal Rpo11/eukaryotic RPB11/RPC19 RNA polymerase subunit family. As to quaternary structure, part of the RNA polymerase complex.

It localises to the cytoplasm. It carries out the reaction RNA(n) + a ribonucleoside 5'-triphosphate = RNA(n+1) + diphosphate. Functionally, DNA-dependent RNA polymerase (RNAP) catalyzes the transcription of DNA into RNA using the four ribonucleoside triphosphates as substrates. The sequence is that of DNA-directed RNA polymerase subunit Rpo11 from Pyrobaculum aerophilum (strain ATCC 51768 / DSM 7523 / JCM 9630 / CIP 104966 / NBRC 100827 / IM2).